The following is a 1004-amino-acid chain: Liprin-beta homolog (1004 aa).

2 stretches are compositionally biased toward low complexity: residues 50–63 and 149–161; these read NGNS…TIGS and SPPS…SSSL. Disordered stretches follow at residues 50-122 and 135-161; these read NGNS…RSSR and HRTD…SSSL. 2 coiled-coil regions span residues 280–328 and 364–396; these read CQEL…VNQS and DEMS…ALDE. 4 disordered regions span residues 341-366, 432-497, 528-550, and 648-686; these read HTNG…DDEM, PSDS…GGNQ, NGNE…GKAS, and FSKL…LGTV. Over residues 434 to 453 the composition is skewed to polar residues; it reads DSMSHSTSFPVSLSSTTSNG. The segment covering 458-474 has biased composition (low complexity); that stretch reads STVQSSSSYNSSLSAVS. 2 stretches are compositionally biased toward polar residues: residues 531 to 541 and 648 to 684; these read EGANHNYSSAS and FSKL…NHLG. SAM domains follow at residues 698-762, 770-833, and 858-930; these read WRSE…IEED, WDVH…LKKA, and VVRW…LLGP.

The protein belongs to the liprin family. Liprin-beta subfamily. In terms of tissue distribution, expressed in pharyngeal muscle, particularly posterior bulb, adjacent to the dorsal and ventral cord (but not in ventral cord neurons), and in body wall muscles.

Involved in the regulation of synaptic function at neuromuscular junctions. Together with the liprin-alpha protein syd-2, may play a role in regulating the structure of the neuronal region, called the active zone, from which synaptic vesicles send neurotransmitter signals across the synapse. Does not seem to be required for neuronal development. May regulate the disassembly of focal adhesions. Does not bind receptor-like tyrosine phosphatases type 2A. The sequence is that of Liprin-beta homolog from Caenorhabditis elegans.